A 129-amino-acid polypeptide reads, in one-letter code: Large ribosomal subunit protein uL22 (129 aa).

Belongs to the universal ribosomal protein uL22 family. As to quaternary structure, part of the 50S ribosomal subunit.

This protein binds specifically to 23S rRNA; its binding is stimulated by other ribosomal proteins, e.g. L4, L17, and L20. It is important during the early stages of 50S assembly. It makes multiple contacts with different domains of the 23S rRNA in the assembled 50S subunit and ribosome. Its function is as follows. The globular domain of the protein is located near the polypeptide exit tunnel on the outside of the subunit, while an extended beta-hairpin is found that lines the wall of the exit tunnel in the center of the 70S ribosome. The protein is Large ribosomal subunit protein uL22 of Brucella suis biovar 1 (strain 1330).